Reading from the N-terminus, the 139-residue chain is Probable trafficking protein particle complex subunit 2 (139 aa).

This sequence belongs to the TRAPP small subunits family. Sedlin subfamily. In terms of assembly, part of the multisubunit TRAPP (transport protein particle) complex.

The protein resides in the cytoplasm. Its subcellular location is the perinuclear region. The protein localises to the endoplasmic reticulum. It is found in the golgi apparatus. Its function is as follows. May play a role in vesicular transport from endoplasmic reticulum to Golgi. Involved in dsRNA uptake. The polypeptide is Probable trafficking protein particle complex subunit 2 (Drosophila melanogaster (Fruit fly)).